A 98-amino-acid chain; its full sequence is NADH-ubiquinone oxidoreductase chain 4L (98 aa).

The next 3 membrane-spanning stretches (helical) occupy residues methionine 1–methionine 21, alanine 29–leucine 49, and threonine 59–valine 79.

This sequence belongs to the complex I subunit 4L family. As to quaternary structure, core subunit of respiratory chain NADH dehydrogenase (Complex I) which is composed of 45 different subunits.

Its subcellular location is the mitochondrion inner membrane. The enzyme catalyses a ubiquinone + NADH + 5 H(+)(in) = a ubiquinol + NAD(+) + 4 H(+)(out). In terms of biological role, core subunit of the mitochondrial membrane respiratory chain NADH dehydrogenase (Complex I) which catalyzes electron transfer from NADH through the respiratory chain, using ubiquinone as an electron acceptor. Part of the enzyme membrane arm which is embedded in the lipid bilayer and involved in proton translocation. This is NADH-ubiquinone oxidoreductase chain 4L (MT-ND4L) from Lipotes vexillifer (Yangtze river dolphin).